A 425-amino-acid chain; its full sequence is Receptor-like protein 55 (425 aa).

A signal peptide spans Met1–Ser25. At Tyr26–Thr397 the chain is on the extracellular side. Residues Asn40, Asn54, Asn79, and Asn132 are each glycosylated (N-linked (GlcNAc...) asparagine). LRR repeat units follow at residues Leu144–Asn169, Met170–Ser193, Leu195–Leu216, Lys217–Leu240, Phe242–Ile264, Ser265–Glu287, and Met288–Lys313. N-linked (GlcNAc...) asparagine glycans are attached at residues Asn182, Asn202, Asn223, Asn245, Asn278, Asn308, and Asn329. The interval Pro355 to Glu389 is disordered. Residues Asn374–Glu389 are compositionally biased toward basic and acidic residues. Asn395 carries an N-linked (GlcNAc...) asparagine glycan. A helical transmembrane segment spans residues Leu398 to Leu418. At Ala419–Ile425 the chain is on the cytoplasmic side.

This sequence belongs to the RLP family.

It is found in the cell membrane. Its function is as follows. Involved in plant defense. The sequence is that of Receptor-like protein 55 from Arabidopsis thaliana (Mouse-ear cress).